We begin with the raw amino-acid sequence, 763 residues long: Phosphoglycerol transferase I (763 aa).

A run of 4 helical transmembrane segments spans residues 1 to 21 (MSELLSFALFLASVLIYAWKA), 26 to 46 (WWFAATLTVLGLFVVLNITLF), 77 to 97 (ILPGIGIVLGLAAVFGALGWI), and 108 to 128 (FGYSLLALLLALGSVDASPAF).

Belongs to the OpgB family.

Its subcellular location is the cell inner membrane. The enzyme catalyses a phosphatidylglycerol + a membrane-derived-oligosaccharide D-glucose = a 1,2-diacyl-sn-glycerol + a membrane-derived-oligosaccharide 6-(glycerophospho)-D-glucose.. Its pathway is glycan metabolism; osmoregulated periplasmic glucan (OPG) biosynthesis. Functionally, transfers a phosphoglycerol residue from phosphatidylglycerol to the membrane-bound nascent glucan backbones. The sequence is that of Phosphoglycerol transferase I from Escherichia coli O6:K15:H31 (strain 536 / UPEC).